Consider the following 224-residue polypeptide: Probable 2' cyclic ADP-D-ribose synthase BdTIR (224 aa).

Residues 51–178 (SRYEVFINHR…RFKFALREAK (128 aa)) form the TIR domain. NAD(+) is bound by residues 60-65 (RGVDTK) and Gly-93. Glu-127 is a catalytic residue.

In terms of assembly, homodimer.

It catalyses the reaction NAD(+) + H2O = ADP-D-ribose + nicotinamide + H(+). The catalysed reaction is NADP(+) + H2O = ADP-D-ribose 2'-phosphate + nicotinamide + H(+). The enzyme catalyses NAD(+) = 2'cADPR + nicotinamide + H(+). Its function is as follows. An NAD(+) hydrolase (NADase). Upon activation catalyzes cleavage of NAD(+) into ADP-D-ribose (ADPR) and nicotinamide; NAD(+) cleavage triggers a defense system that promotes cell death. In addition to ADPR, also generates a cyclization variant of cyclic ADPR termed v-cADPR (2'cADPR). Also hydrolyzes NADP(+), but not other NAD(+)-related molecules. v-cADPR activates ThsA, an NAD(+) hydrolase in B.cereus (AC J8G6Z1). Probably makes 2'cADPR; the cADPR made by this protein is bound by cmTad1 (AC P0DW61) and activates ThsA from B.cereus. Boiling cmTad1 bound to the cyclic nucleotide releases 2'cADPR, strongly suggesting it is the product of this protein. The chain is Probable 2' cyclic ADP-D-ribose synthase BdTIR from Brachypodium distachyon (Purple false brome).